Reading from the N-terminus, the 744-residue chain is Phosphoribosylformylglycinamidine synthase subunit PurL (744 aa).

His-50 is an active-site residue. Positions 53 and 92 each coordinate ATP. Glu-94 serves as a coordination point for Mg(2+). Substrate contacts are provided by residues 95-98 and Arg-117; that span reads SHNH. The active-site Proton acceptor is His-96. Asp-118 contributes to the Mg(2+) binding site. Gln-241 contributes to the substrate binding site. Asp-269 serves as a coordination point for Mg(2+). Substrate is bound at residue 313-315; that stretch reads ESQ. ATP contacts are provided by Asp-494 and Gly-531. A Mg(2+)-binding site is contributed by Asn-532. Residue Ser-534 coordinates substrate.

It belongs to the FGAMS family. Monomer. Part of the FGAM synthase complex composed of 1 PurL, 1 PurQ and 2 PurS subunits.

It is found in the cytoplasm. It catalyses the reaction N(2)-formyl-N(1)-(5-phospho-beta-D-ribosyl)glycinamide + L-glutamine + ATP + H2O = 2-formamido-N(1)-(5-O-phospho-beta-D-ribosyl)acetamidine + L-glutamate + ADP + phosphate + H(+). Its pathway is purine metabolism; IMP biosynthesis via de novo pathway; 5-amino-1-(5-phospho-D-ribosyl)imidazole from N(2)-formyl-N(1)-(5-phospho-D-ribosyl)glycinamide: step 1/2. Part of the phosphoribosylformylglycinamidine synthase complex involved in the purines biosynthetic pathway. Catalyzes the ATP-dependent conversion of formylglycinamide ribonucleotide (FGAR) and glutamine to yield formylglycinamidine ribonucleotide (FGAM) and glutamate. The FGAM synthase complex is composed of three subunits. PurQ produces an ammonia molecule by converting glutamine to glutamate. PurL transfers the ammonia molecule to FGAR to form FGAM in an ATP-dependent manner. PurS interacts with PurQ and PurL and is thought to assist in the transfer of the ammonia molecule from PurQ to PurL. The polypeptide is Phosphoribosylformylglycinamidine synthase subunit PurL (Chelativorans sp. (strain BNC1)).